A 72-amino-acid chain; its full sequence is Translational regulator CsrA (72 aa).

The protein belongs to the CsrA/RsmA family. Homodimer; the beta-strands of each monomer intercalate to form a hydrophobic core, while the alpha-helices form wings that extend away from the core.

Its subcellular location is the cytoplasm. Functionally, a translational regulator that binds mRNA to regulate translation initiation and/or mRNA stability. Usually binds in the 5'-UTR at or near the Shine-Dalgarno sequence preventing ribosome-binding, thus repressing translation. Its main target seems to be the major flagellin gene, while its function is anatagonized by FliW. This chain is Translational regulator CsrA, found in Clostridium botulinum (strain ATCC 19397 / Type A).